A 482-amino-acid chain; its full sequence is Variant surface glycoprotein ANTAT 1.1C (482 aa).

The first 8 residues, 1–8 (LHPQQALA), serve as a signal peptide directing secretion. Disulfide bonds link C24/C151 and C133/C188. N92 is a glycosylation site (N-linked (GlcNAc...) asparagine). Residues N398 and N411 are each glycosylated (N-linked (GlcNAc...) asparagine). D459 carries GPI-anchor amidated aspartate lipidation. Positions 460–482 (SSILVTKKFALSLVSAAFASLLF) are cleaved as a propeptide — removed in mature form.

It is found in the cell membrane. In terms of biological role, VSG forms a coat on the surface of the parasite. The trypanosome evades the immune response of the host by expressing a series of antigenically distinct VSGs from an estimated 1000 VSG genes. This Trypanosoma brucei brucei protein is Variant surface glycoprotein ANTAT 1.1C.